The sequence spans 188 residues: Xanthine phosphoribosyltransferase (188 aa).

Positions 20 and 27 each coordinate xanthine. 127–131 lines the 5-phospho-alpha-D-ribose 1-diphosphate pocket; that stretch reads AHGEA. K155 is a xanthine binding site.

The protein belongs to the purine/pyrimidine phosphoribosyltransferase family. Xpt subfamily. As to quaternary structure, homodimer.

Its subcellular location is the cytoplasm. It catalyses the reaction XMP + diphosphate = xanthine + 5-phospho-alpha-D-ribose 1-diphosphate. Its pathway is purine metabolism; XMP biosynthesis via salvage pathway; XMP from xanthine: step 1/1. Converts the preformed base xanthine, a product of nucleic acid breakdown, to xanthosine 5'-monophosphate (XMP), so it can be reused for RNA or DNA synthesis. The sequence is that of Xanthine phosphoribosyltransferase from Heliobacterium modesticaldum (strain ATCC 51547 / Ice1).